Reading from the N-terminus, the 87-residue chain is Small ribosomal subunit protein bS21 (87 aa).

Positions 47–63 are enriched in basic and acidic residues; it reads YEKPSEKRARQKAEAVR. A disordered region spans residues 47–87; it reads YEKPSEKRARQKAEAVRRARKLARKRAQREGLLPMPKKPGR. Over residues 64-73 the composition is skewed to basic residues; sequence RARKLARKRA.

It belongs to the bacterial ribosomal protein bS21 family.

The polypeptide is Small ribosomal subunit protein bS21 (Caulobacter vibrioides (strain ATCC 19089 / CIP 103742 / CB 15) (Caulobacter crescentus)).